The following is a 250-amino-acid chain: Small ribosomal subunit protein uS3 (250 aa).

In terms of domain architecture, KH type-2 spans 39 to 107; sequence VREFLTKNLK…PAQVSINEID (69 aa). The interval 215–250 is disordered; it reads MNPAPAEERPAKRGRGRGEGQERRGRRGDRAADKGE. Residues 220-250 show a composition bias toward basic and acidic residues; that stretch reads AEERPAKRGRGRGEGQERRGRRGDRAADKGE.

Belongs to the universal ribosomal protein uS3 family. As to quaternary structure, part of the 30S ribosomal subunit. Forms a tight complex with proteins S10 and S14.

Its function is as follows. Binds the lower part of the 30S subunit head. Binds mRNA in the 70S ribosome, positioning it for translation. The sequence is that of Small ribosomal subunit protein uS3 from Acinetobacter baumannii (strain AB0057).